A 377-amino-acid chain; its full sequence is Acetyltransferase ple2 (377 aa).

Positions 1 to 27 (MKPFSPELLVLSFILLVLSCAIRPAKG) are cleaved as a signal peptide. 4 consecutive transmembrane segments (helical) span residues 29-49 (WILW…TTGD), 56-76 (IANN…LTDV), 176-196 (IAAW…ALSL), and 258-278 (PALY…HAIG).

The protein belongs to the wax synthase family.

The protein resides in the membrane. Its pathway is secondary metabolite biosynthesis; terpenoid biosynthesis. Acetyltransferase; part of the gene cluster that mediates the biosynthesis of pleuromutilin, a tricyclic diterpene showing antibacterial properties. The geranylgeranyl diphosphate (GGPP) synthase ple4 catalyzes the first step in pleuromutilin biosynthesis. GGPP is then substrate of the premutilin synthase (PS) ple3 to yield premutilin. Premutilin synthase is a bifunctional enzyme composed of the fusion of a class II diterpene cyclase (DTC) and a class I diterpene synthase (DTS), with the corresponding domains and active sites containing characteristic aspartate-rich motifs. GGPP is first converted to mutildienyl-diphosphate (MPP) at the class II DTC site. MPP is subsequently further cyclized at the class I DTS site, followed by a 1,5-hydride shift and addition of water prior to terminating deprotonation, to yield premutilin. The cytochrome P450 monooxygenases ple5 and ple6 hydroxylate premutilin at C-11 and C-3, respectively, producing 11-hydroxypremutilin and 3-hydroxypremutilin. The combination of the actions of both ple5 and ple6 leads to the production of 3,11-dihydroxypremutilin. The short chain dehydrogenase ple7 further converts 3,11-dihydroxypremutilin into mutilin. The acetyltransferase ple2 then acetylates mutilin to produce 14-O-acetylmutilin. Finally, the cytochrome P450 monooxygenase ple1 catalyzes hydroxylation on the alpha position of the acetyl side chain of 14-O-acetylmutilin to yield pleuromutilin. This Rhodocybe pseudopiperita (Clitopilus pseudopiperitus) protein is Acetyltransferase ple2.